Reading from the N-terminus, the 443-residue chain is MESLSALYKNHIVTLQERTRDVLARFQMDALLIHSGELVNVFLDDHPYPFKVNPQFKAWVPVTQVPNCWLLVDGVNKPKLWFYLPVDYWHNVEPLPTAFWTEEVDVIALPKADGIGSQLPAARGNIGYIGPVPERALGLGIAADKINPKGVIDYLHYYRAYKTDYELACMREAQKSAVNGHRAAYEAFQSGMSEFDINQAYLTATGHRDTDVPYSNIVALNEHASVLHYTKLDHRAPAEMRSFLLDAGAEYNGYAADLTRTWAAHGDNDFAHLIKDVNDEQLALISTMKAGTRYVDYHIQFHQRIAKLLRKHQLVTDMSEEAMVENDLTGPFMPHGIGHPLGLQVHDVAGFMQDDTGTHLAAPSKYPYLRCTRIIEPRMVLTIEPGIYFIESLLAPWREGPFSKHFNWQKIDAMKPFGGIRIEDNVVVHENSIENMTRDLKLA.

Mn(2+) is bound by residues aspartate 246, aspartate 257, histidine 339, glutamate 384, and glutamate 423.

Belongs to the peptidase M24B family. Bacterial-type prolidase subfamily. Mn(2+) is required as a cofactor.

It catalyses the reaction Xaa-L-Pro dipeptide + H2O = an L-alpha-amino acid + L-proline. Its function is as follows. Splits dipeptides with a prolyl residue in the C-terminal position. The protein is Xaa-Pro dipeptidase of Klebsiella pneumoniae (strain 342).